Here is a 190-residue protein sequence, read N- to C-terminus: dCTP deaminase, dUMP-forming (190 aa).

DCTP contacts are provided by residues 101-106 (KSSLGR), Asp119, 127-129 (TLE), Gln148, Tyr162, and Gln174. Catalysis depends on Glu129, which acts as the Proton donor/acceptor. The tract at residues 161 to 190 (PYGSSGVGSKYQGQRGPTPSRSYQNFIRST) is disordered. A compositionally biased stretch (polar residues) spans 171–190 (YQGQRGPTPSRSYQNFIRST).

It belongs to the dCTP deaminase family. As to quaternary structure, homotrimer.

The enzyme catalyses dCTP + 2 H2O = dUMP + NH4(+) + diphosphate. Its pathway is pyrimidine metabolism; dUMP biosynthesis; dUMP from dCTP: step 1/1. In terms of biological role, bifunctional enzyme that catalyzes both the deamination of dCTP to dUTP and the hydrolysis of dUTP to dUMP without releasing the toxic dUTP intermediate. In Mycobacterium marinum (strain ATCC BAA-535 / M), this protein is dCTP deaminase, dUMP-forming.